The sequence spans 212 residues: Pyridoxine/pyridoxamine 5'-phosphate oxidase (212 aa).

Substrate is bound by residues 8–11 and Lys66; that span reads RREY. Residues 61 to 66, 76 to 77, Arg82, Lys83, and Gln105 contribute to the FMN site; these read RIVLLK and FT. Tyr123, Arg127, and Ser131 together coordinate substrate. FMN-binding positions include 140-141 and Trp185; that span reads QS. 191-193 is a substrate binding site; it reads RLH. Arg195 serves as a coordination point for FMN.

It belongs to the pyridoxamine 5'-phosphate oxidase family. Homodimer. FMN serves as cofactor.

It carries out the reaction pyridoxamine 5'-phosphate + O2 + H2O = pyridoxal 5'-phosphate + H2O2 + NH4(+). The catalysed reaction is pyridoxine 5'-phosphate + O2 = pyridoxal 5'-phosphate + H2O2. It functions in the pathway cofactor metabolism; pyridoxal 5'-phosphate salvage; pyridoxal 5'-phosphate from pyridoxamine 5'-phosphate: step 1/1. The protein operates within cofactor metabolism; pyridoxal 5'-phosphate salvage; pyridoxal 5'-phosphate from pyridoxine 5'-phosphate: step 1/1. Catalyzes the oxidation of either pyridoxine 5'-phosphate (PNP) or pyridoxamine 5'-phosphate (PMP) into pyridoxal 5'-phosphate (PLP). This chain is Pyridoxine/pyridoxamine 5'-phosphate oxidase, found in Shewanella pealeana (strain ATCC 700345 / ANG-SQ1).